We begin with the raw amino-acid sequence, 544 residues long: Chaperonin GroEL (544 aa).

ATP contacts are provided by residues 30–33 (TLGP), K51, 87–91 (DGTTT), G415, and D495.

It belongs to the chaperonin (HSP60) family. In terms of assembly, forms a cylinder of 14 subunits composed of two heptameric rings stacked back-to-back. Interacts with the co-chaperonin GroES.

The protein resides in the cytoplasm. The enzyme catalyses ATP + H2O + a folded polypeptide = ADP + phosphate + an unfolded polypeptide.. Its function is as follows. Together with its co-chaperonin GroES, plays an essential role in assisting protein folding. The GroEL-GroES system forms a nano-cage that allows encapsulation of the non-native substrate proteins and provides a physical environment optimized to promote and accelerate protein folding. In Neisseria flavescens, this protein is Chaperonin GroEL.